Reading from the N-terminus, the 371-residue chain is 4-hydroxy-3-methylbut-2-en-1-yl diphosphate synthase (flavodoxin) (371 aa).

[4Fe-4S] cluster-binding residues include cysteine 270, cysteine 273, cysteine 305, and glutamate 312.

This sequence belongs to the IspG family. [4Fe-4S] cluster serves as cofactor.

The enzyme catalyses (2E)-4-hydroxy-3-methylbut-2-enyl diphosphate + oxidized [flavodoxin] + H2O + 2 H(+) = 2-C-methyl-D-erythritol 2,4-cyclic diphosphate + reduced [flavodoxin]. Its pathway is isoprenoid biosynthesis; isopentenyl diphosphate biosynthesis via DXP pathway; isopentenyl diphosphate from 1-deoxy-D-xylulose 5-phosphate: step 5/6. Its function is as follows. Converts 2C-methyl-D-erythritol 2,4-cyclodiphosphate (ME-2,4cPP) into 1-hydroxy-2-methyl-2-(E)-butenyl 4-diphosphate. The protein is 4-hydroxy-3-methylbut-2-en-1-yl diphosphate synthase (flavodoxin) of Shewanella sp. (strain W3-18-1).